A 127-amino-acid chain; its full sequence is Large-conductance mechanosensitive channel (127 aa).

3 helical membrane-spanning segments follow: residues 19 to 39 (VGVIVGAAFTAIVNSLVTNII), 42 to 62 (LLGIFVGSIDFSNLVFTVGSA), and 67 to 87 (GAFINSVINFLIIAFVVFLLI).

The protein belongs to the MscL family. Homopentamer.

The protein resides in the cell membrane. In terms of biological role, channel that opens in response to stretch forces in the membrane lipid bilayer. May participate in the regulation of osmotic pressure changes within the cell. This chain is Large-conductance mechanosensitive channel, found in Levilactobacillus brevis (strain ATCC 367 / BCRC 12310 / CIP 105137 / JCM 1170 / LMG 11437 / NCIMB 947 / NCTC 947) (Lactobacillus brevis).